Consider the following 349-residue polypeptide: 4-hydroxythreonine-4-phosphate dehydrogenase (349 aa).

A substrate-binding site is contributed by T136. A divalent metal cation contacts are provided by H171, H216, and H281. Residues K289, N298, and R307 each contribute to the substrate site.

It belongs to the PdxA family. Homodimer. A divalent metal cation serves as cofactor.

The protein localises to the cytoplasm. The catalysed reaction is 4-(phosphooxy)-L-threonine + NAD(+) = 3-amino-2-oxopropyl phosphate + CO2 + NADH. The protein operates within cofactor biosynthesis; pyridoxine 5'-phosphate biosynthesis; pyridoxine 5'-phosphate from D-erythrose 4-phosphate: step 4/5. Catalyzes the NAD(P)-dependent oxidation of 4-(phosphooxy)-L-threonine (HTP) into 2-amino-3-oxo-4-(phosphooxy)butyric acid which spontaneously decarboxylates to form 3-amino-2-oxopropyl phosphate (AHAP). This chain is 4-hydroxythreonine-4-phosphate dehydrogenase, found in Synechocystis sp. (strain ATCC 27184 / PCC 6803 / Kazusa).